The sequence spans 125 residues: Small ribosomal subunit protein uS13 (125 aa).

It belongs to the universal ribosomal protein uS13 family. As to quaternary structure, part of the 30S ribosomal subunit. Forms a loose heterodimer with protein S19. Forms two bridges to the 50S subunit in the 70S ribosome.

Located at the top of the head of the 30S subunit, it contacts several helices of the 16S rRNA. In the 70S ribosome it contacts the 23S rRNA (bridge B1a) and protein L5 of the 50S subunit (bridge B1b), connecting the 2 subunits; these bridges are implicated in subunit movement. Contacts the tRNAs in the A and P-sites. In Rickettsia bellii (strain OSU 85-389), this protein is Small ribosomal subunit protein uS13.